Reading from the N-terminus, the 441-residue chain is Leucine-rich repeat-containing protein 17 (441 aa).

Positions 1–18 (MRVVTIVILLCFCKAAEL) are cleaved as a signal peptide. LRR repeat units lie at residues 82 to 103 (DLLH…MFSK), 106 to 127 (KLKS…AFFG), and 130 to 151 (KLTT…VFIY). An LRRCT 1 domain is found at 163–214 (NPWHCTCEIETLISMLQIPRNRNLGNYAKCESPQEQKNKKLRQIKSEQLCNE). Residues 225 to 268 (QVSGRPPVIKPEVDSTFCHNYVFPIQTLDCKRKELKKVPNNIPP) enclose the LRRNT domain. LRR repeat units lie at residues 269-290 (DIVK…EFED), 293-314 (ELKK…AFLG), and 317-340 (HLEE…EDLY). The 53-residue stretch at 350–402 (NPWRCDYNIHYLYYWLKHHYNVHFNGLECKTPEEYKGWSVGKYIRSYYEECPK) folds into the LRRCT 2 domain.

As to expression, expressed in osteoblast cell lines. Well expressed in ovary, heart, pancreas, skeletal muscle, lung, and fetal kidney and lung and only at the basal levels in the other tissues examined including adult kidney. More expressed in S-type neuroblastoma cells than in N-type neuroblastoma cells.

The protein resides in the secreted. It is found in the extracellular space. Its function is as follows. Involved in bone homeostasis. Acts as a negative regulator of RANKL-induced osteoclast precursor differentiation from bone marrow precursors. This is Leucine-rich repeat-containing protein 17 (LRRC17) from Homo sapiens (Human).